The primary structure comprises 574 residues: Sodium/hydrogen exchanger 8 (574 aa).

Helical transmembrane passes span 53-73 (MTIFFSLLVLAICIILVHLLI), 77-97 (LHFLPESVAVVSLGIIMGAFI), 116-136 (PNMFFLLLLPPIIFESGYSLH), 149-169 (LFSVFGTAISAFIVGGGIYFL), 184-204 (FAFGSLISAVDPVATIAIFNA), 254-274 (LGYFLKMFFGSAALGTLTGLI), 304-324 (GLAEGISLSGIMAILFSGIVM), 347-367 (VAFMCETCVFAFLGLSIFSFP), 373-393 (SFVIWCIVLVLFGRAVNIFPL), 410-430 (MFIMWFSGLRGAIPYALSLHL), and 444-464 (TTIIIVLFTVLLLGGGTMPLI).

Belongs to the monovalent cation:proton antiporter 1 (CPA1) transporter (TC 2.A.36) family.

It localises to the golgi apparatus membrane. Its function is as follows. Involved in pH regulation to eliminate acids generated by active metabolism or to counter adverse environmental conditions. Major proton extruding system driven by the inward sodium ion chemical gradient. Plays an important role in signal transduction. This Gallus gallus (Chicken) protein is Sodium/hydrogen exchanger 8.